A 101-amino-acid chain; its full sequence is Chaperone modulatory protein CbpM (101 aa).

This sequence belongs to the CbpM family.

Its function is as follows. Interacts with CbpA and inhibits both the DnaJ-like co-chaperone activity and the DNA binding activity of CbpA. Together with CbpA, modulates the activity of the DnaK chaperone system. Does not inhibit the co-chaperone activity of DnaJ. This Pseudomonas putida (strain GB-1) protein is Chaperone modulatory protein CbpM.